Here is a 495-residue protein sequence, read N- to C-terminus: N-succinylglutamate 5-semialdehyde dehydrogenase (495 aa).

228–233 is an NAD(+) binding site; it reads GSYATG. Catalysis depends on residues glutamate 251 and cysteine 285.

It belongs to the aldehyde dehydrogenase family. AstD subfamily.

It catalyses the reaction N-succinyl-L-glutamate 5-semialdehyde + NAD(+) + H2O = N-succinyl-L-glutamate + NADH + 2 H(+). It participates in amino-acid degradation; L-arginine degradation via AST pathway; L-glutamate and succinate from L-arginine: step 4/5. In terms of biological role, catalyzes the NAD-dependent reduction of succinylglutamate semialdehyde into succinylglutamate. The protein is N-succinylglutamate 5-semialdehyde dehydrogenase of Legionella pneumophila (strain Paris).